We begin with the raw amino-acid sequence, 294 residues long: Basic endochitinase (294 aa).

Positions 1-24 (MNIKVSLLFILPIFLLLLTSKVKA) are cleaved as a signal peptide. The GH18 domain maps to 25–294 (GDIVVYWGQD…GYSSAIRGAV (270 aa)). 2 disulfide bridges follow: cysteine 44–cysteine 91 and cysteine 74–cysteine 81. The active-site Proton donor is the glutamate 151. A disulfide bridge connects residues cysteine 182 and cysteine 211.

Belongs to the glycosyl hydrolase 18 family. Chitinase class II subfamily.

It carries out the reaction Random endo-hydrolysis of N-acetyl-beta-D-glucosaminide (1-&gt;4)-beta-linkages in chitin and chitodextrins.. In terms of biological role, this protein functions as a defense against chitin containing fungal pathogens. This Nicotiana tabacum (Common tobacco) protein is Basic endochitinase.